The primary structure comprises 704 residues: Ion-translocating oxidoreductase complex subunit C (704 aa).

2 4Fe-4S ferredoxin-type domains span residues 368–397 and 407–436; these read MGAP…QQLY and KATA…VQYF. [4Fe-4S] cluster is bound by residues C377, C380, C383, C387, C416, C419, C422, and C426. The disordered stretch occupies residues 534–682; that stretch reads QARAKQAAHP…AEPADPRKAA (149 aa).

The protein belongs to the 4Fe4S bacterial-type ferredoxin family. RnfC subfamily. In terms of assembly, the complex is composed of six subunits: RsxA, RsxB, RsxC, RsxD, RsxE and RsxG. [4Fe-4S] cluster is required as a cofactor.

Its subcellular location is the cell inner membrane. Functionally, part of a membrane-bound complex that couples electron transfer with translocation of ions across the membrane. Required to maintain the reduced state of SoxR. In Salmonella enteritidis PT4 (strain P125109), this protein is Ion-translocating oxidoreductase complex subunit C.